A 152-amino-acid chain; its full sequence is Putative pre-16S rRNA nuclease (152 aa).

Belongs to the YqgF nuclease family.

It localises to the cytoplasm. Its function is as follows. Could be a nuclease involved in processing of the 5'-end of pre-16S rRNA. In Synechocystis sp. (strain ATCC 27184 / PCC 6803 / Kazusa), this protein is Putative pre-16S rRNA nuclease.